The sequence spans 239 residues: Cytochrome b6-f complex iron-sulfur subunit 1, cyanelle (239 aa).

Residues 1 to 60 (MAFTTTAVVAPRGAKITGQSSTCAIQNGKTVAVGTSKQVGSFKPVFAAAKPAKETTFSVS) constitute a cyanelle transit peptide. A helical transmembrane segment spans residues 81–101 (LLGAIAGPVAGAGGPFVSFLV). Residues 125–221 (VSSWLETHKP…VSVLEDGVVA (97 aa)) enclose the Rieske domain. Residues C167, H169, C185, and H188 each coordinate [2Fe-2S] cluster. A disulfide bond links C172 and C187.

This sequence belongs to the Rieske iron-sulfur protein family. In terms of assembly, the 4 large subunits of the cytochrome b6-f complex are cytochrome b6, subunit IV (17 kDa polypeptide, petD), cytochrome f and the Rieske protein, while the 4 small subunits are petG, petL, petM and petN. The complex functions as a dimer. The cofactor is [2Fe-2S] cluster.

The protein localises to the plastid. It localises to the cyanelle thylakoid membrane. The enzyme catalyses 2 oxidized [plastocyanin] + a plastoquinol + 2 H(+)(in) = 2 reduced [plastocyanin] + a plastoquinone + 4 H(+)(out). Functionally, component of the cytochrome b6-f complex, which mediates electron transfer between photosystem II (PSII) and photosystem I (PSI), cyclic electron flow around PSI, and state transitions. The protein is Cytochrome b6-f complex iron-sulfur subunit 1, cyanelle (petC-1) of Cyanophora paradoxa.